The following is a 218-amino-acid chain: uncharacterized protein (218 aa).

The next 5 helical transmembrane spans lie at isoleucine 28 to leucine 48, phenylalanine 66 to leucine 86, leucine 92 to leucine 112, methionine 122 to cysteine 142, and isoleucine 173 to phenylalanine 193.

The protein resides in the cell membrane. This is an uncharacterized protein from Haemophilus influenzae (strain ATCC 51907 / DSM 11121 / KW20 / Rd).